A 366-amino-acid polypeptide reads, in one-letter code: Histidinol-phosphate aminotransferase 2 (366 aa).

Lys226 is modified (N6-(pyridoxal phosphate)lysine).

Belongs to the class-II pyridoxal-phosphate-dependent aminotransferase family. Histidinol-phosphate aminotransferase subfamily. Homodimer. The cofactor is pyridoxal 5'-phosphate.

The enzyme catalyses L-histidinol phosphate + 2-oxoglutarate = 3-(imidazol-4-yl)-2-oxopropyl phosphate + L-glutamate. The protein operates within amino-acid biosynthesis; L-histidine biosynthesis; L-histidine from 5-phospho-alpha-D-ribose 1-diphosphate: step 7/9. The polypeptide is Histidinol-phosphate aminotransferase 2 (Cupriavidus pinatubonensis (strain JMP 134 / LMG 1197) (Cupriavidus necator (strain JMP 134))).